Consider the following 337-residue polypeptide: GDP-mannose transporter 1 (337 aa).

The Cytoplasmic segment spans residues 1–16 (MSELKTGHAGHNPWAS). Residues 17-37 (VANSGPISILSYCGSSILMTV) form a helical membrane-spanning segment. At 38–51 (TNKFVVNLKDFNMN) the chain is on the lumenal side. The helical transmembrane segment at 52-72 (FVMLFVQSLVCTITLIILRIL) threads the bilayer. Residues 73–92 (GYAKFRSLNKTDAKNWFPIS) are Cytoplasmic-facing. Residues 93–113 (FLLVLMIYTSSKALQYLAVPI) traverse the membrane as a helical segment. Over 114–119 (YTIFKN) the chain is Lumenal. N-linked (GlcNAc...) asparagine glycosylation occurs at Asn119. A helical membrane pass occupies residues 120 to 140 (LTIILIAYGEVLFFGGSVTSM). Residues 141–144 (ELSS) lie on the Cytoplasmic side of the membrane. Residues 145-165 (FLLMVLSSVVATWGDQQAVAA) form a helical membrane-spanning segment. The Lumenal segment spans residues 166 to 180 (KAASLAEGAAGAVAS). A helical transmembrane segment spans residues 181–201 (FNPGYFWMFTNCITSALFVLI). Residues 202–215 (MRKRIKLTNFKDFD) are Cytoplasmic-facing. Residues 216–236 (TMFYNNVLALPILLLFSFCVE) traverse the membrane as a helical segment. At 237 to 252 (DWSSVNLTNNFSNDSL) the chain is on the lumenal side. 3 N-linked (GlcNAc...) asparagine glycosylation sites follow: Asn242, Asn246, and Asn249. Residues 253 to 273 (TAMIISGVASVGISYCSGWCV) traverse the membrane as a helical segment. Topologically, residues 274–279 (RVTSST) are cytoplasmic. The helical transmembrane segment at 280 to 300 (TYSMVGALNKLPIALSGLIFF) threads the bilayer. At 301 to 304 (DAPR) the chain is on the lumenal side. Residues 305 to 325 (NFLSILSIFIGFLSGIIYAVA) form a helical membrane-spanning segment. The Cytoplasmic segment spans residues 326–337 (KQKKQQAQPLRK).

Belongs to the TPT transporter family. SLC35D subfamily. As to quaternary structure, homooligomer.

The protein localises to the golgi apparatus membrane. It localises to the cytoplasmic vesicle membrane. Its subcellular location is the endoplasmic reticulum membrane. Involved in the import of GDP-mannose from the cytoplasm into the Golgi lumen. Defective copy causes severe glycosylation defect and abnormal retention of soluble endoplasmic reticulum proteins. Involved in vanadate sensitivity. This Saccharomyces cerevisiae (strain YJM789) (Baker's yeast) protein is GDP-mannose transporter 1 (VRG4).